Reading from the N-terminus, the 395-residue chain is Mitogen-activated protein kinase 6 (395 aa).

The tract at residues 1–35 (MDGGSGQPAADTEMTEAPGGFPAAAPSPQMPGIEN) is disordered. Residues 17–27 (APGGFPAAAPS) are compositionally biased toward low complexity. Residues 63-348 (KPPIMPIGKG…VLDALAHPYL (286 aa)) enclose the Protein kinase domain. ATP contacts are provided by residues 69–77 (IGKGAYGIV) and Lys-92. The active-site Proton acceptor is Asp-189. Thr-221 is modified (phosphothreonine). A TXY motif is present at residues 221–223 (TEY). Tyr-223 bears the Phosphotyrosine mark. Phosphothreonine is present on Thr-226.

Belongs to the protein kinase superfamily. CMGC Ser/Thr protein kinase family. MAP kinase subfamily. As to quaternary structure, interacts with MEKK1, MKK1 and MKK2. May form a ternary complex with MEKK1 and MKK1 or MKK2. Interacts with NDPK2, AP2C1, MKP1 and PTP1. Interacts with DSPTP1B/MKP2, especially during HR-like responses triggered by fungal elicitors. Interacts with MKK4, MKK5 and MKK6. Binds to LIP5. Interacts with VQ4 and IKU1/VQ14. Interacts with RACK1A, RACK1B and RACK1C. Interacts with PTP1. Interacts with FLZ9. Binds to BASL and YDA. In terms of processing, dually phosphorylated on Thr-221 and Tyr-223, which activates the enzyme. Dephosphorylated by DSPTP1B/MKP2.

It is found in the cytoplasm. The protein resides in the nucleus. It localises to the cell cortex. The catalysed reaction is L-seryl-[protein] + ATP = O-phospho-L-seryl-[protein] + ADP + H(+). The enzyme catalyses L-threonyl-[protein] + ATP = O-phospho-L-threonyl-[protein] + ADP + H(+). With respect to regulation, activated by threonine and tyrosine phosphorylation. Activated by the MAP kinase kinases MKK2, MKK3, MKK4, MKK5, MKK7 and MKK9. Activated in response to touch, wounding, low temperature, low humidity, salt stress, hydrogen peroxide, ozone, ACC (an ethylene precursor), jasmonic acid (JA), mastoparan and UVC. Activated in response to elicitors: oligogalacturonides, hexameric chitin fragments, fungal xylanase, and the bacterial flagellin and harpin. Activated upon Pseudomonas syringae pv. tomato DC3000 infection. Repressed by the protein phosphatase 2C AP2C1 and the protein-tyrosine-phosphatases MKP1 and PTP1. Repressed by DSPTP1B/MKP2-mediated dephosphorylation. Activated by polarized BASL. Triggered by MKKK20 in response to various abiotic stresses, including osmotic stress, cold and reactive oxygen species (ROS). Activated by MKK5 in response to abscisic acid (ABA). Its function is as follows. Mitogen-activated protein kinase (MAPK) which regulates abscisic acid (ABA) responses in a MAPKKK20-MKK5-MPK6 cascade involved in root growth (e.g. root cell division and elongation) and stomatal response. Involved in oxidative stress-mediated signaling cascade (such as ozone). Involved in the innate immune MAP kinase signaling cascade (MEKK1, MKK4/MKK5 and MPK3/MPK6) downstream of bacterial flagellin receptor FLS2. May be involved in hypersensitive response (HR)-mediated signaling cascade by modulating LIP5 phosphorylation and subsequent multivesicular bodies (MVBs) trafficking. May phosphorylate regulators of WRKY transcription factors. Phosphorylates 1-aminocyclopropane-1-carboxylic acid synthases (ACS2 and ACS6) and may be involved in the regulation of bacterial elicitor flagellin-induced ethylene production. Regulates locally gene-mediated and basal resistance response to certain pathogens. May be involved in the cold and salinity stress-mediated MAP kinase signaling cascade (MEKK1, MKK1/MKK2 and MPK4/MPK6). MKK1-MPK6 module mediates abscisic acid (ABA)-dependent CAT1 expression with H(2)O(2) production and response to drought and salt stress. MKK1-MPK6 module is also involved in sugar signaling during the process of seed germination. MKK3-MPK6 module plays an important role in the jasmonate signal transduction pathway through the negative regulation of MYC2/JIN1 expression. MKK9-MPK3/MPK6 module phosphorylates and activates EIN3, leading to the promotion of EIN3-mediated transcription in ethylene signaling. MPK3/MPK6 cascade regulates camalexin synthesis through transcriptional regulation of the biosynthetic genes after pathogen infection. MKK9-MPK6 module positively regulates leaf senescence. YDA-MKK4/MKK5-MPK3/MPK6 module regulates stomatal cell fate before the guard mother cell (GMC) is specified. When activated, reinforces the feedback loop by phosphorylating BASL, and inhibits stomatal fate by phosphorylating SPCH. This MAPK cascade also functions downstream of the ER receptor in regulating coordinated local cell proliferation, which shapes the morphology of plant organs. The protein is Mitogen-activated protein kinase 6 of Arabidopsis thaliana (Mouse-ear cress).